The primary structure comprises 180 residues: Large ribosomal subunit protein uL5 (180 aa).

The protein belongs to the universal ribosomal protein uL5 family. As to quaternary structure, part of the 50S ribosomal subunit; part of the 5S rRNA/L5/L18/L25 subcomplex. Contacts the 5S rRNA and the P site tRNA. Forms a bridge to the 30S subunit in the 70S ribosome.

Its function is as follows. This is one of the proteins that bind and probably mediate the attachment of the 5S RNA into the large ribosomal subunit, where it forms part of the central protuberance. In the 70S ribosome it contacts protein S13 of the 30S subunit (bridge B1b), connecting the 2 subunits; this bridge is implicated in subunit movement. Contacts the P site tRNA; the 5S rRNA and some of its associated proteins might help stabilize positioning of ribosome-bound tRNAs. The polypeptide is Large ribosomal subunit protein uL5 (Streptococcus uberis (strain ATCC BAA-854 / 0140J)).